The chain runs to 678 residues: UvrABC system protein B (678 aa).

The Helicase ATP-binding domain maps to 35-422 (EGVSDGLMFQ…ADNVVEQVVR (388 aa)). 48–55 (GVTGSGKT) is a binding site for ATP. Residues 101 to 124 (YYDYYQPEAYVPTRDLFIEKDSSI) carry the Beta-hairpin motif. Residues 439 to 605 (QVDDLLGEIH…GVSKAVRELI (167 aa)) form the Helicase C-terminal domain. A UVR domain is found at 633–668 (AREIRRLEKLMMDHARNLEFEQAAAARDALNALKSR).

This sequence belongs to the UvrB family. As to quaternary structure, forms a heterotetramer with UvrA during the search for lesions. Interacts with UvrC in an incision complex.

The protein resides in the cytoplasm. Functionally, the UvrABC repair system catalyzes the recognition and processing of DNA lesions. A damage recognition complex composed of 2 UvrA and 2 UvrB subunits scans DNA for abnormalities. Upon binding of the UvrA(2)B(2) complex to a putative damaged site, the DNA wraps around one UvrB monomer. DNA wrap is dependent on ATP binding by UvrB and probably causes local melting of the DNA helix, facilitating insertion of UvrB beta-hairpin between the DNA strands. Then UvrB probes one DNA strand for the presence of a lesion. If a lesion is found the UvrA subunits dissociate and the UvrB-DNA preincision complex is formed. This complex is subsequently bound by UvrC and the second UvrB is released. If no lesion is found, the DNA wraps around the other UvrB subunit that will check the other stand for damage. This is UvrABC system protein B from Bordetella pertussis (strain Tohama I / ATCC BAA-589 / NCTC 13251).